The chain runs to 640 residues: Asparagine synthetase domain-containing protein 1 (640 aa).

The active-site For GATase activity is Cys2. Residues 2-184 (CGICCAVSFS…ASGIFRIDLK (183 aa)) enclose the Glutamine amidotransferase type-2 domain. Residues 286–602 (QFIGVLSTAV…GLTASALLPK (317 aa)) enclose the Asparagine synthetase domain.

The sequence is that of Asparagine synthetase domain-containing protein 1 (ASNSD1) from Bos taurus (Bovine).